A 379-amino-acid chain; its full sequence is Queuine tRNA-ribosyltransferase (379 aa).

Asp-94 functions as the Proton acceptor in the catalytic mechanism. Residues 94–98, Asp-148, Gln-191, and Gly-218 each bind substrate; that span reads DSGGF. The tract at residues 249 to 255 is RNA binding; sequence GVGSPDA. The active-site Nucleophile is Asp-268. The interval 273–277 is RNA binding; important for wobble base 34 recognition; it reads TRIAR. Positions 306, 308, 311, and 337 each coordinate Zn(2+).

Belongs to the queuine tRNA-ribosyltransferase family. In terms of assembly, homodimer. Within each dimer, one monomer is responsible for RNA recognition and catalysis, while the other monomer binds to the replacement base PreQ1. Zn(2+) serves as cofactor.

It carries out the reaction 7-aminomethyl-7-carbaguanine + guanosine(34) in tRNA = 7-aminomethyl-7-carbaguanosine(34) in tRNA + guanine. The protein operates within tRNA modification; tRNA-queuosine biosynthesis. Catalyzes the base-exchange of a guanine (G) residue with the queuine precursor 7-aminomethyl-7-deazaguanine (PreQ1) at position 34 (anticodon wobble position) in tRNAs with GU(N) anticodons (tRNA-Asp, -Asn, -His and -Tyr). Catalysis occurs through a double-displacement mechanism. The nucleophile active site attacks the C1' of nucleotide 34 to detach the guanine base from the RNA, forming a covalent enzyme-RNA intermediate. The proton acceptor active site deprotonates the incoming PreQ1, allowing a nucleophilic attack on the C1' of the ribose to form the product. After dissociation, two additional enzymatic reactions on the tRNA convert PreQ1 to queuine (Q), resulting in the hypermodified nucleoside queuosine (7-(((4,5-cis-dihydroxy-2-cyclopenten-1-yl)amino)methyl)-7-deazaguanosine). The sequence is that of Queuine tRNA-ribosyltransferase from Macrococcus caseolyticus (strain JCSC5402) (Macrococcoides caseolyticum).